We begin with the raw amino-acid sequence, 1737 residues long: Myosin-M heavy chain (1737 aa).

The region spanning 4–55 (LEGDIVWVPHTVNGYCRGKIIGYNEKNQVTVRLLELNEEIKINEQLIQNYNQ) is the Myosin N-terminal SH3-like domain. The Myosin motor domain occupies 59–886 (KDFSDMVEIQ…LYIYLEKKRY (828 aa)). Position 154-161 (154-161 (GESGSGKT)) interacts with ATP. A disordered region spans residues 640–727 (KSNDNNSNNN…NNNSSNNKKS (88 aa)). Low complexity-rich tracts occupy residues 641–663 (SNDNNSNNNNSNNNSSSSSSSQS) and 679–724 (NSGS…SSNN). Positions 754–761 (YIRCIKPN) are actin-binding. 2 IQ domains span residues 889–918 (LVDSVLKIQAFFKMIKIRNQYKRNKESSLF) and 912–941 (NKESSLFLQTLIRAQRAKKDFEQLVILENK). Positions 926–1039 (QRAKKDFEQL…KKKNEQNLSL (114 aa)) form a coiled coil. Positions 947-1028 (RKKELERQRK…IEKKRKEEEK (82 aa)) are enriched in basic and acidic residues. Disordered stretches follow at residues 947 to 1099 (RKKE…PSTK), 1117 to 1199 (LHGS…PNFN), 1266 to 1290 (GINKPIPQRTISSSENSPLSRANSS), and 1304 to 1364 (SLST…SNED). The segment covering 1044–1070 (ITNSPSLINTTTTTTTTTTTTTNTSSP) has biased composition (low complexity). The span at 1071–1081 (PLSPPISPRPS) shows a compositional bias: pro residues. The segment covering 1082 to 1098 (TPSSTSSSSSTTSSPST) has biased composition (low complexity). The segment covering 1121–1131 (SHSDKNSKEDN) has biased composition (basic and acidic residues). The span at 1132–1141 (NSNNNNNGDS) shows a compositional bias: low complexity. Residues 1143-1153 (IILSSDSSFGQ) show a composition bias toward polar residues. Residues 1162–1171 (PTPPPPPPLK) show a composition bias toward pro residues. Composition is skewed to polar residues over residues 1180 to 1198 (GVENNSSPNLWSHRNSPNF) and 1274 to 1288 (RTISSSENSPLSRAN). A compositionally biased stretch (low complexity) spans 1304–1359 (SLSTSTTPSTPTTPKTPTTLSSSSVSTSTSLSSVSSSVSSSSSSSIPTPIIESTPS). Residues 1389-1572 (FRIKIINELI…SDIVQSINEA (184 aa)) enclose the DH domain. The PH domain maps to 1603–1714 (TLLMEGTVSA…WFKQIKALIQ (112 aa)).

It belongs to the TRAFAC class myosin-kinesin ATPase superfamily. Myosin family. In terms of assembly, monomer.

The protein resides in the cytoplasm. Functionally, myosins are actin-based motor molecules with ATPase activity. Involved in macropinocytosis and remodeling of actin cytoskeleton. The polypeptide is Myosin-M heavy chain (myoM) (Dictyostelium discoideum (Social amoeba)).